The following is a 348-amino-acid chain: Holliday junction branch migration complex subunit RuvB (348 aa).

A disordered region spans residues 1–20; that stretch reads MKPPARMVSPERRSDDVGDT. The tract at residues 1 to 183 is large ATPase domain (RuvB-L); it reads MKPPARMVSP…FGIPIRLNFY (183 aa). ATP-binding positions include leucine 22, arginine 23, glycine 64, lysine 67, threonine 68, threonine 69, 130–132, arginine 173, tyrosine 183, and arginine 220; that span reads EDF. Threonine 68 is a Mg(2+) binding site. The interval 184 to 254 is small ATPAse domain (RuvB-S); the sequence is TVEELEGIVT…IADHALSALE (71 aa). The tract at residues 257–348 is head domain (RuvB-H); sequence AAGLDAMDRR…FGLFGSEDDA (92 aa). DNA contacts are provided by arginine 293, arginine 312, and arginine 317.

This sequence belongs to the RuvB family. As to quaternary structure, homohexamer. Forms an RuvA(8)-RuvB(12)-Holliday junction (HJ) complex. HJ DNA is sandwiched between 2 RuvA tetramers; dsDNA enters through RuvA and exits via RuvB. An RuvB hexamer assembles on each DNA strand where it exits the tetramer. Each RuvB hexamer is contacted by two RuvA subunits (via domain III) on 2 adjacent RuvB subunits; this complex drives branch migration. In the full resolvosome a probable DNA-RuvA(4)-RuvB(12)-RuvC(2) complex forms which resolves the HJ.

The protein resides in the cytoplasm. The catalysed reaction is ATP + H2O = ADP + phosphate + H(+). The RuvA-RuvB-RuvC complex processes Holliday junction (HJ) DNA during genetic recombination and DNA repair, while the RuvA-RuvB complex plays an important role in the rescue of blocked DNA replication forks via replication fork reversal (RFR). RuvA specifically binds to HJ cruciform DNA, conferring on it an open structure. The RuvB hexamer acts as an ATP-dependent pump, pulling dsDNA into and through the RuvAB complex. RuvB forms 2 homohexamers on either side of HJ DNA bound by 1 or 2 RuvA tetramers; 4 subunits per hexamer contact DNA at a time. Coordinated motions by a converter formed by DNA-disengaged RuvB subunits stimulates ATP hydrolysis and nucleotide exchange. Immobilization of the converter enables RuvB to convert the ATP-contained energy into a lever motion, pulling 2 nucleotides of DNA out of the RuvA tetramer per ATP hydrolyzed, thus driving DNA branch migration. The RuvB motors rotate together with the DNA substrate, which together with the progressing nucleotide cycle form the mechanistic basis for DNA recombination by continuous HJ branch migration. Branch migration allows RuvC to scan DNA until it finds its consensus sequence, where it cleaves and resolves cruciform DNA. In Bradyrhizobium sp. (strain BTAi1 / ATCC BAA-1182), this protein is Holliday junction branch migration complex subunit RuvB.